The sequence spans 427 residues: Peptidase B (427 aa).

Residues lysine 195 and aspartate 200 each contribute to the Mn(2+) site. Lysine 207 is an active-site residue. 3 residues coordinate Mn(2+): aspartate 218, aspartate 277, and glutamate 279. Arginine 281 is an active-site residue.

The protein belongs to the peptidase M17 family. Homohexamer. Requires Mn(2+) as cofactor.

It localises to the cytoplasm. The catalysed reaction is Release of an N-terminal amino acid, Xaa, from a peptide or arylamide. Xaa is preferably Glu or Asp but may be other amino acids, including Leu, Met, His, Cys and Gln.. Functionally, probably plays an important role in intracellular peptide degradation. The polypeptide is Peptidase B (Citrobacter koseri (strain ATCC BAA-895 / CDC 4225-83 / SGSC4696)).